Consider the following 430-residue polypeptide: Protein translocase subunit SecY (430 aa).

A run of 10 helical transmembrane segments spans residues 18 to 38 (IFFT…PAPG), 68 to 88 (FSIF…MQLL), 117 to 137 (LAIS…NNYL), 147 to 167 (IMSY…LIWL), 179 to 199 (GISI…LIQF), 217 to 237 (VLGL…VLEA), 269 to 289 (GVIP…LTLF), 308 to 328 (NVGM…YAFV), 368 to 388 (FVGS…TKFM), and 389 to 409 (GLPQ…GVAI).

This sequence belongs to the SecY/SEC61-alpha family. In terms of assembly, component of the Sec protein translocase complex. Heterotrimer consisting of SecY, SecE and SecG subunits. The heterotrimers can form oligomers, although 1 heterotrimer is thought to be able to translocate proteins. Interacts with the ribosome. Interacts with SecDF, and other proteins may be involved. Interacts with SecA.

It localises to the cell membrane. Its function is as follows. The central subunit of the protein translocation channel SecYEG. Consists of two halves formed by TMs 1-5 and 6-10. These two domains form a lateral gate at the front which open onto the bilayer between TMs 2 and 7, and are clamped together by SecE at the back. The channel is closed by both a pore ring composed of hydrophobic SecY resides and a short helix (helix 2A) on the extracellular side of the membrane which forms a plug. The plug probably moves laterally to allow the channel to open. The ring and the pore may move independently. This is Protein translocase subunit SecY from Staphylococcus aureus (strain NCTC 8325 / PS 47).